A 491-amino-acid chain; its full sequence is Stromelysin-3 (491 aa).

The first 35 residues, 1–35, serve as a signal peptide directing secretion; sequence MARAACLLRAISRALLLPLPLLLLLLLLLPPQLMA. A propeptide spans 36–101 (activation peptide); it reads RARPPENHRH…VLNARNRQKR (66 aa). A Cysteine switch motif is present at residues 82–89; it reads LRCGVPDP. Cys84, His168, and Asp170 together coordinate Zn(2+). The Ca(2+) site is built by Asp175, Gly176, Gly178, and Ile180. Zn(2+) contacts are provided by His183, His196, and His218. Glu219 is an active-site residue. Residues His222 and His228 each coordinate Zn(2+). The segment at 260–279 is disordered; that stretch reads YGRPQLTPTSPTPTLSSQAG. Low complexity predominate over residues 263 to 277; it reads PQLTPTSPTPTLSSQ. The cysteines at positions 297 and 483 are disulfide-linked. Hemopexin repeat units lie at residues 298–342, 343–385, 387–435, and 436–483; these read ETSF…WQGL, PSPV…KLGL, GSPV…WRGV, and PSEI…FFDC.

This sequence belongs to the peptidase M10A family. It depends on Ca(2+) as a cofactor. Requires Zn(2+) as cofactor. The precursor is cleaved by a furin endopeptidase. As to expression, highly expressed in ovary and uterus.

It localises to the secreted. Its subcellular location is the extracellular space. The protein localises to the extracellular matrix. Its function is as follows. May play an important role in the progression of epithelial malignancies. This is Stromelysin-3 (Mmp11) from Rattus norvegicus (Rat).